We begin with the raw amino-acid sequence, 391 residues long: S-adenosylmethionine synthase (391 aa).

Residues 1–20 (MPRSDYLFTSESVSEGHPDK) are disordered. An ATP-binding site is contributed by H17. Mg(2+) is bound at residue D19. Position 45 (E45) interacts with K(+). L-methionine is bound by residues E58 and Q102. A flexible loop region spans residues 102-112 (QSADIAQGVDA). ATP-binding positions include 169–171 (DAK), 235–236 (KF), D244, 250–251 (RK), A267, and K271. D244 provides a ligand contact to L-methionine. K275 contributes to the L-methionine binding site.

The protein belongs to the AdoMet synthase family. Homotetramer; dimer of dimers. Mg(2+) serves as cofactor. The cofactor is K(+).

The protein localises to the cytoplasm. It catalyses the reaction L-methionine + ATP + H2O = S-adenosyl-L-methionine + phosphate + diphosphate. Its pathway is amino-acid biosynthesis; S-adenosyl-L-methionine biosynthesis; S-adenosyl-L-methionine from L-methionine: step 1/1. Its function is as follows. Catalyzes the formation of S-adenosylmethionine (AdoMet) from methionine and ATP. The overall synthetic reaction is composed of two sequential steps, AdoMet formation and the subsequent tripolyphosphate hydrolysis which occurs prior to release of AdoMet from the enzyme. This chain is S-adenosylmethionine synthase, found in Methylorubrum populi (strain ATCC BAA-705 / NCIMB 13946 / BJ001) (Methylobacterium populi).